The primary structure comprises 186 residues: Elongation factor P (186 aa).

The protein belongs to the elongation factor P family.

It is found in the cytoplasm. The protein operates within protein biosynthesis; polypeptide chain elongation. Functionally, involved in peptide bond synthesis. Stimulates efficient translation and peptide-bond synthesis on native or reconstituted 70S ribosomes in vitro. Probably functions indirectly by altering the affinity of the ribosome for aminoacyl-tRNA, thus increasing their reactivity as acceptors for peptidyl transferase. In Shewanella baltica (strain OS223), this protein is Elongation factor P.